Consider the following 493-residue polypeptide: Probable cytochrome P450 6a13 (493 aa).

Cys-435 provides a ligand contact to heme.

This sequence belongs to the cytochrome P450 family. It depends on heme as a cofactor.

It is found in the endoplasmic reticulum membrane. It localises to the microsome membrane. May be involved in the metabolism of insect hormones and in the breakdown of synthetic insecticides. The sequence is that of Probable cytochrome P450 6a13 (Cyp6a13) from Drosophila melanogaster (Fruit fly).